Consider the following 948-residue polypeptide: Valine--tRNA ligase (948 aa).

The 'HIGH' region motif lies at 40–50 (PNVTGSLHMGH). A 'KMSKS' region motif is present at residues 551-555 (KMSKS). Lysine 554 lines the ATP pocket. A coiled-coil region spans residues 879-947 (LIDKGAELAR…LAEQHARISS (69 aa)).

This sequence belongs to the class-I aminoacyl-tRNA synthetase family. ValS type 1 subfamily. As to quaternary structure, monomer.

It is found in the cytoplasm. It carries out the reaction tRNA(Val) + L-valine + ATP = L-valyl-tRNA(Val) + AMP + diphosphate. Functionally, catalyzes the attachment of valine to tRNA(Val). As ValRS can inadvertently accommodate and process structurally similar amino acids such as threonine, to avoid such errors, it has a 'posttransfer' editing activity that hydrolyzes mischarged Thr-tRNA(Val) in a tRNA-dependent manner. This chain is Valine--tRNA ligase, found in Pseudomonas fluorescens (strain ATCC BAA-477 / NRRL B-23932 / Pf-5).